We begin with the raw amino-acid sequence, 880 residues long: Beta-N-acetylglucosaminidase (880 aa).

The first 27 residues, 1–27 (MKKRLIAPMLLSAASLAFFAMSGSAQA), serve as a signal peptide directing secretion. 3 consecutive SPOR domains span residues 70-149 (SGTT…VKAY), 150-229 (GAAQ…LKET), and 230-311 (VKGQ…YQQV). A run of 2 repeats spans residues 439 to 473 (ITTESLLDQTKVNQALTFFKSNHISVASQKTGQTA) and 479 to 513 (ITTEAIISQEEIDRVLTFFKQNHIAVTTSKTGQTA). The 71-residue stretch at 630-700 (TATSTVTADV…VDPNNFSRDS (71 aa)) folds into the SH3b domain.

It belongs to the glycosyl hydrolase 73 family. Homodimer.

The protein resides in the secreted. It localises to the cell wall. The enzyme catalyses an N(4)-(oligosaccharide-(1-&gt;3)-[oligosaccharide-(1-&gt;6)]-beta-D-Man-(1-&gt;4)-beta-D-GlcNAc-(1-&gt;4)-alpha-D-GlcNAc)-L-asparaginyl-[protein] + H2O = an oligosaccharide-(1-&gt;3)-[oligosaccharide-(1-&gt;6)]-beta-D-Man-(1-&gt;4)-D-GlcNAc + N(4)-(N-acetyl-beta-D-glucosaminyl)-L-asparaginyl-[protein]. Inhibited by diethyl pyrocarbonate, slightly by EDTA. Not inhibited by PMSF, diisopropyl fluorophosphate, 2-mercaptoethanol or N-ethylmaleimide. In terms of biological role, cell wall hydrolase not involved in cell autolysis, competence, sporulation or germination. It hydrolyzes the beta-1,4 glycan bond between the N-acetylglucosaminyl and the N-acetylmuramoyl residues in the glycan chain. The protein is Beta-N-acetylglucosaminidase (lytD) of Bacillus subtilis (strain 168).